A 202-amino-acid chain; its full sequence is LexA repressor (202 aa).

The segment at residues Arg-28–Lys-48 is a DNA-binding region (H-T-H motif). Catalysis depends on for autocatalytic cleavage activity residues Ser-119 and Lys-156.

Belongs to the peptidase S24 family. As to quaternary structure, homodimer.

It catalyses the reaction Hydrolysis of Ala-|-Gly bond in repressor LexA.. Functionally, represses a number of genes involved in the response to DNA damage (SOS response), including recA and lexA. Binds to the 16 bp palindromic sequence 5'-CTGTATATATATACAG-3'. In the presence of single-stranded DNA, RecA interacts with LexA causing an autocatalytic cleavage which disrupts the DNA-binding part of LexA, leading to derepression of the SOS regulon and eventually DNA repair. This chain is LexA repressor, found in Sodalis glossinidius (strain morsitans).